A 523-amino-acid chain; its full sequence is Arabinose import ATP-binding protein AraG (523 aa).

ABC transporter domains follow at residues Leu-20–Arg-255 and Ile-268–Thr-511. Position 52–59 (Gly-52–Ser-59) interacts with ATP.

It belongs to the ABC transporter superfamily. Arabinose importer (TC 3.A.1.2.2) family. The complex is composed of two ATP-binding proteins (AraG), two transmembrane proteins (AraH) and a solute-binding protein (AraF).

It localises to the cell inner membrane. The catalysed reaction is L-arabinose(out) + ATP + H2O = L-arabinose(in) + ADP + phosphate + H(+). Functionally, part of the ABC transporter complex AraFGH involved in arabinose import. Responsible for energy coupling to the transport system. This is Arabinose import ATP-binding protein AraG from Yersinia pestis bv. Antiqua (strain Antiqua).